The primary structure comprises 381 residues: tRNA pseudouridine synthase D (381 aa).

The active-site Nucleophile is aspartate 81. Residues 160–335 (GMPNYFGSQR…TLGSRRFFWV (176 aa)) form the TRUD domain.

It belongs to the pseudouridine synthase TruD family.

It catalyses the reaction uridine(13) in tRNA = pseudouridine(13) in tRNA. In terms of biological role, responsible for synthesis of pseudouridine from uracil-13 in transfer RNAs. The sequence is that of tRNA pseudouridine synthase D from Helicobacter pylori (strain G27).